The sequence spans 57 residues: MTTVTQMKCACPHCLCIVSLNDAIMVDGKPYCSEVCANGTCKENSGCGHAGCGCGSA.

This sequence belongs to the metallothionein superfamily. Type 14 family.

In terms of biological role, this protein complexes cadmium, zinc and copper. This is Metallothionein (mtnA) from Thermostichus vulcanus (Synechococcus vulcanus).